The sequence spans 139 residues: Actin-depolymerizing factor 4 (139 aa).

The 135-residue stretch at 5 to 139 (SSGVAIHDDC…SLDALKDRVK (135 aa)) folds into the ADF-H domain.

Belongs to the actin-binding proteins ADF family. Interacts with LECRK1 (via kinase domain).

It is found in the cytoplasm. The protein resides in the cytoskeleton. Functionally, actin-depolymerizing protein. Severs actin filaments (F-actin) and binds to actin monomers. Involved in innate immunity. Required for the expression of defense-related genes PR1A, LOX2 and CHS1 upon biotic stresses. Required for basal resistance to the fungal blast (Magnaporthe grisea), bacterial blight (Xanthomonas oryzae pv. oryzae, Xoo) and the herbivorous insect brown planthopper (Nilaparvata lugens, BPH). Involved in the promotion of seed germination. Required for the expression of alpha-amylase genes during seed germination. In Oryza sativa subsp. japonica (Rice), this protein is Actin-depolymerizing factor 4 (ADF4).